We begin with the raw amino-acid sequence, 431 residues long: ATP-dependent RNA helicase DBP8 (431 aa).

Residues 2–30 carry the Q motif motif; sequence ADFKSLGLSKWLTESLRAMKITQPTAIQK. The Helicase ATP-binding domain occupies 33 to 209; the sequence is IPKILEGRDC…NAPVQKGKPP (177 aa). 46–53 lines the ATP pocket; sequence AKTGSGKT. The DEAD box signature appears at 155-158; the sequence is DEAD. The Helicase C-terminal domain maps to 242–389; it reads YLYQLLTCEE…TNKVHDTAVI (148 aa). The disordered stretch occupies residues 404-431; the sequence is LMAMQKENFGERKRQQKKKQNDGKSLRS. Positions 411-431 are enriched in basic and acidic residues; the sequence is NFGERKRQQKKKQNDGKSLRS.

Belongs to the DEAD box helicase family. DDX49/DBP8 subfamily. As to quaternary structure, interacts with ESF2.

Its subcellular location is the nucleus. It localises to the nucleolus. The catalysed reaction is ATP + H2O = ADP + phosphate + H(+). Functionally, ATP-binding RNA helicase involved in 40S ribosomal subunit biogenesis and is required for the normal formation of 18S rRNAs through pre-rRNA processing at A0, A1 and A2 sites. Required for vegetative growth. The protein is ATP-dependent RNA helicase DBP8 (DBP8) of Saccharomyces cerevisiae (strain YJM789) (Baker's yeast).